The following is a 210-amino-acid chain: Large ribosomal subunit protein uL4 (210 aa).

Positions 44-79 (QHQGTHKVKTRSEVSGGGRKPYRQKGTGNARRGSSR) are disordered.

The protein belongs to the universal ribosomal protein uL4 family. As to quaternary structure, part of the 50S ribosomal subunit.

In terms of biological role, one of the primary rRNA binding proteins, this protein initially binds near the 5'-end of the 23S rRNA. It is important during the early stages of 50S assembly. It makes multiple contacts with different domains of the 23S rRNA in the assembled 50S subunit and ribosome. Forms part of the polypeptide exit tunnel. The protein is Large ribosomal subunit protein uL4 of Chloroherpeton thalassium (strain ATCC 35110 / GB-78).